We begin with the raw amino-acid sequence, 470 residues long: A-type ATP synthase subunit B (470 aa).

Belongs to the ATPase alpha/beta chains family. As to quaternary structure, has multiple subunits with at least A(3), B(3), C, D, E, F, H, I and proteolipid K(x).

It localises to the cell membrane. Component of the A-type ATP synthase that produces ATP from ADP in the presence of a proton gradient across the membrane. The B chain is a regulatory subunit. The sequence is that of A-type ATP synthase subunit B from Haloarcula marismortui (strain ATCC 43049 / DSM 3752 / JCM 8966 / VKM B-1809) (Halobacterium marismortui).